We begin with the raw amino-acid sequence, 333 residues long: Glycerol-3-phosphate dehydrogenase [NAD(P)+] (333 aa).

Positions 10, 11, and 105 each coordinate NADPH. K105, G136, and T138 together coordinate sn-glycerol 3-phosphate. A140 provides a ligand contact to NADPH. Positions 191, 244, 254, 255, and 256 each coordinate sn-glycerol 3-phosphate. K191 serves as the catalytic Proton acceptor. R255 contacts NADPH. 2 residues coordinate NADPH: V279 and E281.

Belongs to the NAD-dependent glycerol-3-phosphate dehydrogenase family.

Its subcellular location is the cytoplasm. It catalyses the reaction sn-glycerol 3-phosphate + NAD(+) = dihydroxyacetone phosphate + NADH + H(+). The catalysed reaction is sn-glycerol 3-phosphate + NADP(+) = dihydroxyacetone phosphate + NADPH + H(+). It functions in the pathway membrane lipid metabolism; glycerophospholipid metabolism. Functionally, catalyzes the reduction of the glycolytic intermediate dihydroxyacetone phosphate (DHAP) to sn-glycerol 3-phosphate (G3P), the key precursor for phospholipid synthesis. This is Glycerol-3-phosphate dehydrogenase [NAD(P)+] from Syntrophotalea carbinolica (strain DSM 2380 / NBRC 103641 / GraBd1) (Pelobacter carbinolicus).